Here is a 251-residue protein sequence, read N- to C-terminus: Leucine-rich repeat and calponin homology domain-containing protein 1 (251 aa).

Positions 73 to 97 (SNGSEYSPNEIRANSPAISPTANST) are disordered. 2 positions are modified to phosphoserine: S87 and S91. The span at 88–97 (PAISPTANST) shows a compositional bias: polar residues. T123 carries the phosphothreonine modification. One can recognise a Calponin-homology (CH) domain in the interval 131 to 244 (MREEKELVEH…ITVQALLDVT (114 aa)).

Interacts (via LRR repeats) with unphosphorylated DOCK8 (via DHR-2 domain); the interaction prevents the interaction between DOCK8 and CDC42.

Its subcellular location is the cytoplasm. In terms of biological role, acts as a negative regulator of GTPase CDC42 by sequestering CDC42-guanine exchange factor DOCK8. Probably by preventing CDC42 activation, negatively regulates CD4(+) T-cell migration. This is Leucine-rich repeat and calponin homology domain-containing protein 1 from Felis catus (Cat).